We begin with the raw amino-acid sequence, 239 residues long: Pimeloyl-[acyl-carrier protein] methyl ester esterase (239 aa).

Substrate-binding positions include tryptophan 20, 77–78 (SM), and 138–142 (FISLQ). Residue serine 77 is the Nucleophile of the active site. Active-site residues include aspartate 192 and histidine 220. Histidine 220 is a substrate binding site.

This sequence belongs to the AB hydrolase superfamily. Carboxylesterase BioH family. In terms of assembly, monomer.

It is found in the cytoplasm. It catalyses the reaction 6-carboxyhexanoyl-[ACP] methyl ester + H2O = 6-carboxyhexanoyl-[ACP] + methanol + H(+). Its pathway is cofactor biosynthesis; biotin biosynthesis. In terms of biological role, the physiological role of BioH is to remove the methyl group introduced by BioC when the pimeloyl moiety is complete. It allows to synthesize pimeloyl-ACP via the fatty acid synthetic pathway through the hydrolysis of the ester bonds of pimeloyl-ACP esters. This chain is Pimeloyl-[acyl-carrier protein] methyl ester esterase, found in Legionella pneumophila (strain Lens).